Here is a 96-residue protein sequence, read N- to C-terminus: Protein Vpr (96 aa).

Residues Met1 to Leu42 form a homooligomerization region. Phosphoserine; by host is present on residues Ser79, Ser94, and Ser96.

This sequence belongs to the HIV-1 VPR protein family. Homooligomer, may form homodimer. Interacts with p6-gag region of the Pr55 Gag precursor protein through a (Leu-X-X)4 motif near the C-terminus of the P6gag protein. Interacts with host UNG. May interact with host RAD23A/HHR23A. Interacts with host VPRBP/DCAF1, leading to hijack the CUL4A-RBX1-DDB1-DCAF1/VPRBP complex, mediating ubiquitination of host proteins such as TERT and ZGPAT and arrest of the cell cycle in G2 phase. Post-translationally, phosphorylated on several residues by host. These phosphorylations regulate VPR activity for the nuclear import of the HIV-1 pre-integration complex.

Its subcellular location is the virion. It localises to the host nucleus. The protein localises to the host extracellular space. In terms of biological role, during virus replication, may deplete host UNG protein, and incude G2-M cell cycle arrest. Acts by targeting specific host proteins for degradation by the 26S proteasome, through association with the cellular CUL4A-DDB1 E3 ligase complex by direct interaction with host VPRPB/DCAF-1. Cell cycle arrest reportedly occurs within hours of infection and is not blocked by antiviral agents, suggesting that it is initiated by the VPR carried into the virion. Additionally, VPR induces apoptosis in a cell cycle dependent manner suggesting that these two effects are mechanistically linked. Detected in the serum and cerebrospinal fluid of AIDS patient, VPR may also induce cell death to bystander cells. Functionally, during virus entry, plays a role in the transport of the viral pre-integration (PIC) complex to the host nucleus. This function is crucial for viral infection of non-dividing macrophages. May act directly at the nuclear pore complex, by binding nucleoporins phenylalanine-glycine (FG)-repeat regions. This Human immunodeficiency virus type 1 group M subtype B (isolate RF/HAT3) (HIV-1) protein is Protein Vpr.